Consider the following 67-residue polypeptide: MKPDEIRKMTKEERLRRLNELRLELIKLRMQARVGTLTNTARIRNIKRDIARILTIMREEELGISRK.

The protein belongs to the universal ribosomal protein uL29 family.

The protein is Large ribosomal subunit protein uL29 of Staphylothermus marinus (strain ATCC 43588 / DSM 3639 / JCM 9404 / F1).